A 157-amino-acid chain; its full sequence is Putative pre-16S rRNA nuclease (157 aa).

Belongs to the YqgF nuclease family.

It is found in the cytoplasm. In terms of biological role, could be a nuclease involved in processing of the 5'-end of pre-16S rRNA. The chain is Putative pre-16S rRNA nuclease from Parasynechococcus marenigrum (strain WH8102).